Here is a 520-residue protein sequence, read N- to C-terminus: Cytochrome P450 4F3 (520 aa).

The chain crosses the membrane as a helical span at residues 11 to 31 (LWPMAASPWLLLLLVGASWLL). The heme site is built by E328 and C468.

This sequence belongs to the cytochrome P450 family. The cofactor is heme. As to expression, selectively expressed in blood neutrophils and bone marrow cells. Coexpressed with CYP4F3B in prostate, ileum and trachea. In terms of tissue distribution, selectively expressed in liver and kidney. It is also the predominant CYP4F isoform in trachea and tissues of the gastrointestinal tract.

It localises to the endoplasmic reticulum membrane. The protein localises to the microsome membrane. It catalyses the reaction an organic molecule + reduced [NADPH--hemoprotein reductase] + O2 = an alcohol + oxidized [NADPH--hemoprotein reductase] + H2O + H(+). The enzyme catalyses leukotriene B4 + reduced [NADPH--hemoprotein reductase] + O2 = 20-hydroxy-leukotriene B4 + oxidized [NADPH--hemoprotein reductase] + H2O + H(+). It carries out the reaction 20-hydroxy-leukotriene B4 + reduced [NADPH--hemoprotein reductase] + O2 = 20-oxo-leukotriene B4 + oxidized [NADPH--hemoprotein reductase] + 2 H2O + H(+). The catalysed reaction is 20-oxo-leukotriene B4 + reduced [NADPH--hemoprotein reductase] + O2 = 20-carboxy-leukotriene B4 + oxidized [NADPH--hemoprotein reductase] + H2O + 2 H(+). It catalyses the reaction (5Z,8Z,11Z)-eicosatrienoate + reduced [NADPH--hemoprotein reductase] + O2 = 20-hydroxy-(5Z,8Z,11Z)-eicosatrienoate + oxidized [NADPH--hemoprotein reductase] + H2O + H(+). The enzyme catalyses (5Z,8Z,11Z,14Z)-eicosatetraenoate + reduced [NADPH--hemoprotein reductase] + O2 = 20-hydroxy-(5Z,8Z,11Z,14Z)-eicosatetraenoate + oxidized [NADPH--hemoprotein reductase] + H2O + H(+). It carries out the reaction (5Z,8Z,11Z,14Z,17Z)-eicosapentaenoate + reduced [NADPH--hemoprotein reductase] + O2 = 19-hydroxy-(5Z,8Z,11Z,14Z,17Z)-eicosapentaenoate + oxidized [NADPH--hemoprotein reductase] + H2O + H(+). The catalysed reaction is (5Z,8Z,11Z,14Z,17Z)-eicosapentaenoate + reduced [NADPH--hemoprotein reductase] + O2 = 20-hydroxy-(5Z,8Z,11Z,14Z,17Z)-eicosapentaenoate + oxidized [NADPH--hemoprotein reductase] + H2O + H(+). It catalyses the reaction (4Z,7Z,10Z,13Z,16Z,19Z)-docosahexaenoate + reduced [NADPH--hemoprotein reductase] + O2 = 21-hydroxy-(4Z,7Z,10Z,13Z,16Z,19Z)-docosahexaenoate + oxidized [NADPH--hemoprotein reductase] + H2O + H(+). The enzyme catalyses (4Z,7Z,10Z,13Z,16Z,19Z)-docosahexaenoate + reduced [NADPH--hemoprotein reductase] + O2 = 22-hydroxy-(4Z,7Z,10Z,13Z,16Z,19Z)-docosahexaenoate + oxidized [NADPH--hemoprotein reductase] + H2O + H(+). It carries out the reaction 8,9-epoxy-(5Z,11Z,14Z)-eicosatrienoate + reduced [NADPH--hemoprotein reductase] + O2 = 20-hydroxy-8,9-epoxy-(5Z,11Z,14Z)-eicosatrienoate + oxidized [NADPH--hemoprotein reductase] + H2O + H(+). The catalysed reaction is 11,12-epoxy-(5Z,8Z,14Z)-eicosatrienoate + reduced [NADPH--hemoprotein reductase] + O2 = 20-hydroxy-11,12-epoxy-(5Z,8Z,14Z)-eicosatrienoate + oxidized [NADPH--hemoprotein reductase] + H2O + H(+). It catalyses the reaction 14,15-epoxy-(5Z,8Z,11Z)-eicosatrienoate + reduced [NADPH--hemoprotein reductase] + O2 = 20-hydroxy-14,15-epoxy-(5Z,8Z,11Z)-eicosatrienoate + oxidized [NADPH--hemoprotein reductase] + H2O + H(+). The enzyme catalyses 12,13-epoxy-(9Z)-octadecenoate + reduced [NADPH--hemoprotein reductase] + O2 = 18-hydroxy-12,13-epoxy-(9Z)-octadecenoate + oxidized [NADPH--hemoprotein reductase] + H2O + H(+). It carries out the reaction 9,10-epoxy-(12Z)-octadecenoate + reduced [NADPH--hemoprotein reductase] + O2 = 18-hydroxy-9,10-epoxy-(12Z)-octadecenoate + oxidized [NADPH--hemoprotein reductase] + H2O + H(+). The catalysed reaction is 9,10-epoxyoctadecanoate + reduced [NADPH--hemoprotein reductase] + O2 = 18-hydroxy-9,10-epoxy-octadecanoate + oxidized [NADPH--hemoprotein reductase] + H2O + H(+). It catalyses the reaction (12R)-hydroxy-(9Z)-octadecenoate + reduced [NADPH--hemoprotein reductase] + O2 = (12R),18-dihydroxy-(9Z)-octadecenoate + oxidized [NADPH--hemoprotein reductase] + H2O + H(+). The enzyme catalyses 12-hydroxyoctadecanoate + reduced [NADPH--hemoprotein reductase] + O2 = 12,18-dihydroxyoctadecanoate + oxidized [NADPH--hemoprotein reductase] + H2O + H(+). It carries out the reaction 5-hydroxy-(6E,8Z,11Z,14Z)-eicosatetraenoate + reduced [NADPH--hemoprotein reductase] + O2 = 5,20-dihydroxy-(6E,8Z,11Z,14Z)-eicosatetraenoate + oxidized [NADPH--hemoprotein reductase] + H2O + H(+). The catalysed reaction is 8-hydroxy-(5Z,9E,11Z,14Z)-eicosatetraenoate + reduced [NADPH--hemoprotein reductase] + O2 = 8,20-dihydroxy-(5Z,9E,11Z,14Z)-eicosatetraenoate + oxidized [NADPH--hemoprotein reductase] + H2O + H(+). It catalyses the reaction 12-hydroxy-(5Z,8Z,10E,14Z)-eicosatetraenoate + reduced [NADPH--hemoprotein reductase] + O2 = 12,20-dihydroxy-(5Z,8Z,10E,14Z)-eicosatetraenoate + oxidized [NADPH--hemoprotein reductase] + H2O + H(+). The enzyme catalyses 5-hydroxy-(6E,8Z,11Z,14Z,17Z)-eicosapentaenoate + reduced [NADPH--hemoprotein reductase] + O2 = 5,20-dihydroxy-(6E,8Z,11Z,14Z,17Z)-eicosapentaenoate + oxidized [NADPH--hemoprotein reductase] + H2O + H(+). It carries out the reaction lipoxin A4 + reduced [NADPH--hemoprotein reductase] + O2 = 20-hydroxy-lipoxin A4 + oxidized [NADPH--hemoprotein reductase] + H2O + H(+). The catalysed reaction is lipoxin B4 + reduced [NADPH--hemoprotein reductase] + O2 = 20-hydroxy-lipoxin B4 + oxidized [NADPH--hemoprotein reductase] + H2O + H(+). It catalyses the reaction 22-hydroxydocosanoate + reduced [NADPH--hemoprotein reductase] + O2 = 22-oxodocosanoate + oxidized [NADPH--hemoprotein reductase] + 2 H2O + H(+). The enzyme catalyses 22-oxodocosanoate + reduced [NADPH--hemoprotein reductase] + O2 = docosanedioate + oxidized [NADPH--hemoprotein reductase] + H2O + 2 H(+). It carries out the reaction docosanoate + reduced [NADPH--hemoprotein reductase] + O2 = 22-hydroxydocosanoate + oxidized [NADPH--hemoprotein reductase] + H2O + H(+). The catalysed reaction is tetracosanoate + reduced [NADPH--hemoprotein reductase] + O2 = 24-hydroxytetracosanoate + oxidized [NADPH--hemoprotein reductase] + H2O + H(+). It catalyses the reaction hexacosanoate + reduced [NADPH--hemoprotein reductase] + O2 = 26-hydroxyhexacosanoate + oxidized [NADPH--hemoprotein reductase] + H2O + H(+). The enzyme catalyses 26-hydroxyhexacosanoate + reduced [NADPH--hemoprotein reductase] + O2 = 26-oxohexacosanoate + oxidized [NADPH--hemoprotein reductase] + 2 H2O + H(+). It carries out the reaction 26-oxohexacosanoate + reduced [NADPH--hemoprotein reductase] + O2 = hexacosanedioate + oxidized [NADPH--hemoprotein reductase] + H2O + 2 H(+). The catalysed reaction is 3-hydroxyoctadecanoate + reduced [NADPH--hemoprotein reductase] + O2 = 3,18-dihydroxyoctadecanoate + oxidized [NADPH--hemoprotein reductase] + H2O + H(+). It catalyses the reaction 3-hydroxyhexadecanoate + reduced [NADPH--hemoprotein reductase] + O2 = 3,16-dihydroxyhexadecanoate + oxidized [NADPH--hemoprotein reductase] + H2O + H(+). It functions in the pathway lipid metabolism; leukotriene B4 degradation. The protein operates within lipid metabolism; arachidonate metabolism. Inhibited by carbon monoxide (CO). In terms of biological role, a cytochrome P450 monooxygenase involved in the metabolism of various endogenous substrates, including fatty acids and their oxygenated derivatives (oxylipins). Mechanistically, uses molecular oxygen inserting one oxygen atom into a substrate, and reducing the second into a water molecule, with two electrons provided by NADPH via cytochrome P450 reductase (CPR; NADPH-ferrihemoprotein reductase). May play a role in inactivation of pro-inflammatory and anti-inflammatory oxylipins during the resolution of inflammation. Its function is as follows. Catalyzes predominantly the oxidation of the terminal carbon (omega-oxidation) of oxylipins in myeloid cells, displaying higher affinity for arachidonate metabolite leukotriene B4 (LTB4). Inactivates LTB4 via three successive oxidative transformations to 20-hydroxy-LTB4, then to 20-oxo-LTB4 and to 20-carboxy-LTB4. Has omega-hydroxylase activity toward long-chain fatty acid epoxides with preference for 8,9-epoxy-(5Z,11Z,14Z)-eicosatrienoate (EET) and 9,10-epoxyoctadecanoate. Omega-hydroxylates monohydroxy polyunsaturated fatty acids (PUFAs), including hydroxyeicosatetraenoates (HETEs) and hydroxyeicosapentaenoates (HEPEs), to dihydroxy compounds. Contributes to the degradation of saturated very long-chain fatty acids (VLCFAs) such as docosanoic acid, by catalyzing successive omega-oxidations to the corresponding dicarboxylic acid, thereby initiating chain shortening. Has low hydroxylase activity toward PUFAs. Catalyzes predominantly the oxidation of the terminal carbon (omega-oxidation) of polyunsaturated fatty acids (PUFAs). Participates in the conversion of arachidonic acid to 20-hydroxyeicosatetraenoic acid (20-HETE), a signaling molecule acting both as vasoconstrictive and natriuretic with overall effect on arterial blood pressure. Has high omega-hydroxylase activity toward other PUFAs, including eicosatrienoic acid (ETA), eicosapentaenoic acid (EPA) and docosahexaenoic acid (DHA). Can also catalyze the oxidation of the penultimate carbon (omega-1 oxidation) of PUFAs with lower efficiency. Contributes to the degradation of saturated very long-chain fatty acids (VLCFAs) such as docosanoic acid and hexacosanoic acid, by catalyzing successive omega-oxidations to the corresponding dicarboxylic acids, thereby initiating chain shortening. Omega-hydroxylates long-chain 3-hydroxy fatty acids, likely initiating the oxidative conversion to the corresponding 3-hydroxydicarboxylic fatty acids. Has omega-hydroxylase activity toward long-chain fatty acid epoxides with preference for 8,9-epoxy-(5Z,11Z,14Z)-eicosatrienoate (EET) and 9,10-epoxyoctadecanoate. This Homo sapiens (Human) protein is Cytochrome P450 4F3.